We begin with the raw amino-acid sequence, 434 residues long: Methylenetetrahydrofolate--tRNA-(uracil-5-)-methyltransferase TrmFO (434 aa).

FAD is bound at residue 10–15 (GAGLAG).

The protein belongs to the MnmG family. TrmFO subfamily. FAD serves as cofactor.

Its subcellular location is the cytoplasm. It catalyses the reaction uridine(54) in tRNA + (6R)-5,10-methylene-5,6,7,8-tetrahydrofolate + NADH + H(+) = 5-methyluridine(54) in tRNA + (6S)-5,6,7,8-tetrahydrofolate + NAD(+). It carries out the reaction uridine(54) in tRNA + (6R)-5,10-methylene-5,6,7,8-tetrahydrofolate + NADPH + H(+) = 5-methyluridine(54) in tRNA + (6S)-5,6,7,8-tetrahydrofolate + NADP(+). Catalyzes the folate-dependent formation of 5-methyl-uridine at position 54 (M-5-U54) in all tRNAs. The sequence is that of Methylenetetrahydrofolate--tRNA-(uracil-5-)-methyltransferase TrmFO from Bacillus cereus (strain ATCC 10987 / NRS 248).